Here is a 321-residue protein sequence, read N- to C-terminus: Degreening-related gene dee76 protein (321 aa).

The protein belongs to the Mo25 family.

The sequence is that of Degreening-related gene dee76 protein (DEE76) from Auxenochlorella protothecoides (Green microalga).